Consider the following 170-residue polypeptide: Small ribosomal subunit protein uS4 (170 aa).

One can recognise an S4 RNA-binding domain in the interval 100–164 (RRLQTVVYRE…SDLTDELHPA (65 aa)).

This sequence belongs to the universal ribosomal protein uS4 family. As to quaternary structure, part of the 30S ribosomal subunit. Contacts protein S5. The interaction surface between S4 and S5 is involved in control of translational fidelity.

Its function is as follows. One of the primary rRNA binding proteins, it binds directly to 16S rRNA where it nucleates assembly of the body of the 30S subunit. In terms of biological role, with S5 and S12 plays an important role in translational accuracy. The protein is Small ribosomal subunit protein uS4 of Halobacterium salinarum (strain ATCC 29341 / DSM 671 / R1).